Here is a 41-residue protein sequence, read N- to C-terminus: U-megalopygitoxin(4)-Mo5 (41 aa).

A signal peptide spans 1–23 (MKCSLLLVVFAAMVALFAAGTNA).

The protein belongs to the caterpillar 4 family. In terms of tissue distribution, expressed by the venom apparatus.

It is found in the secreted. Its function is as follows. Probable toxin. The chain is U-megalopygitoxin(4)-Mo5 from Megalopyge opercularis (Southern flannel moth).